The primary structure comprises 288 residues: MSNLKQLRTRIKSVKSTQKITKAMQLVSASKLTKIKNQIAHSNFYVEAISKMMSTVLSADIYDFPIEAQKFFNTETNKANLLIVMTSERGLCRTFNYMIIKQVKSDIETLKSKGEKIKLIIIGKKGYEALKKPYESYIDSYFELPKNHDENLMLQIKQKIMALVANLEVSNCTIYFNRFKNAMTQSMTKQQILPIEKYHDDSKIEEANYEYEGENLIQNLINLYVNSQINYALLQNRASEEGSRMTAMENATNNAHDIINKLVLKLNRSRQAIITMELIEIIAGSEAV.

The protein belongs to the ATPase gamma chain family. F-type ATPases have 2 components, CF(1) - the catalytic core - and CF(0) - the membrane proton channel. CF(1) has five subunits: alpha(3), beta(3), gamma(1), delta(1), epsilon(1). CF(0) has three main subunits: a, b and c.

The protein localises to the cell inner membrane. Functionally, produces ATP from ADP in the presence of a proton gradient across the membrane. The gamma chain is believed to be important in regulating ATPase activity and the flow of protons through the CF(0) complex. This is ATP synthase gamma chain from Rickettsia bellii (strain OSU 85-389).